A 329-amino-acid polypeptide reads, in one-letter code: Biotin synthase (329 aa).

The Radical SAM core domain maps to 48–278 (FVGDKVYLCS…SKKISVCGGR (231 aa)). [4Fe-4S] cluster contacts are provided by Cys66, Cys70, and Cys73. Residues Ser143 and Cys203 each contribute to the [2Fe-2S] cluster site.

The protein belongs to the radical SAM superfamily. Biotin synthase family. In terms of assembly, homodimer. Requires [4Fe-4S] cluster as cofactor. The cofactor is [2Fe-2S] cluster.

It catalyses the reaction (4R,5S)-dethiobiotin + (sulfur carrier)-SH + 2 reduced [2Fe-2S]-[ferredoxin] + 2 S-adenosyl-L-methionine = (sulfur carrier)-H + biotin + 2 5'-deoxyadenosine + 2 L-methionine + 2 oxidized [2Fe-2S]-[ferredoxin]. Its pathway is cofactor biosynthesis; biotin biosynthesis; biotin from 7,8-diaminononanoate: step 2/2. Its function is as follows. Catalyzes the conversion of dethiobiotin (DTB) to biotin by the insertion of a sulfur atom into dethiobiotin via a radical-based mechanism. The chain is Biotin synthase from Geotalea uraniireducens (strain Rf4) (Geobacter uraniireducens).